The following is a 109-amino-acid chain: MSTTEIEKVVKGASYSALLLNDCGLPITAANIAALFKTAKLNGHETTFKTFEDFLKTNPITNYIGAIGGSAPAAASSAPAKKEEPKKEEPKKEEPKEEETDMDMGDLFG.

A disordered region spans residues 71–109 (APAAASSAPAKKEEPKKEEPKKEEPKEEETDMDMGDLFG). The span at 80 to 95 (AKKEEPKKEEPKKEEP) shows a compositional bias: basic and acidic residues. Tandem repeats lie at residues 81–85 (KKEEP), 86–90 (KKEEP), and 91–95 (KKEEP). The segment at 81–95 (KKEEPKKEEPKKEEP) is 3 X 5 AA tandem repeats of K-K-E-E-P. A compositionally biased stretch (acidic residues) spans 96–109 (KEEETDMDMGDLFG).

It belongs to the eukaryotic ribosomal protein P1/P2 family. Not phosphorylated.

The sequence is that of Large ribosomal subunit protein P1 (RPLP1) from Tetrahymena thermophila.